Consider the following 550-residue polypeptide: Chaperonin GroEL (550 aa).

ATP-binding positions include 30–33, K51, 87–91, G415, and D495; these read TLGP and DGTTT.

This sequence belongs to the chaperonin (HSP60) family. As to quaternary structure, forms a cylinder of 14 subunits composed of two heptameric rings stacked back-to-back. Interacts with the co-chaperonin GroES.

The protein localises to the cytoplasm. The enzyme catalyses ATP + H2O + a folded polypeptide = ADP + phosphate + an unfolded polypeptide.. Its function is as follows. Together with its co-chaperonin GroES, plays an essential role in assisting protein folding. The GroEL-GroES system forms a nano-cage that allows encapsulation of the non-native substrate proteins and provides a physical environment optimized to promote and accelerate protein folding. The sequence is that of Chaperonin GroEL from Dechloromonas aromatica (strain RCB).